We begin with the raw amino-acid sequence, 97 residues long: YcgL domain-containing protein CKO_01183 (97 aa).

In terms of domain architecture, YcgL spans 1 to 85; that stretch reads MFCVIYRSSK…PPEDLLKQHL (85 aa). Positions 74–97 are disordered; it reads PPPPEDLLKQHLSAPGENKPDAKS.

The protein is YcgL domain-containing protein CKO_01183 of Citrobacter koseri (strain ATCC BAA-895 / CDC 4225-83 / SGSC4696).